Reading from the N-terminus, the 520-residue chain is Putative cytochrome P450 CYP13A4 (520 aa).

Position 464 (cysteine 464) interacts with heme.

Belongs to the cytochrome P450 family. The cofactor is heme.

Functionally, cytochromes P450 are a group of heme-thiolate monooxygenases. They oxidize a variety of structurally unrelated compounds, including steroids, fatty acids, and xenobiotics. This is Putative cytochrome P450 CYP13A4 (cyp-13A4) from Caenorhabditis elegans.